The chain runs to 873 residues: Polyribonucleotide nucleotidyltransferase (873 aa).

2 residues coordinate Mg(2+): D521 and D527. The KH domain occupies 587–646 (PRIITTTVPVDKIGEVIGPKGKMINQIQEDTGAEIAIEDDGTVYISSEGGEAAEKAKQII). The region spanning 658–730 (GETYKGTVVK…DRGKISLAIP (73 aa)) is the S1 motif domain. Positions 727–873 (LAIPGFENQE…VRRDFDPFDD (147 aa)) are disordered. Residues 742–857 (RRSDDRPRRD…EYREGREVRH (116 aa)) show a composition bias toward basic and acidic residues.

This sequence belongs to the polyribonucleotide nucleotidyltransferase family. The cofactor is Mg(2+).

It localises to the cytoplasm. It carries out the reaction RNA(n+1) + phosphate = RNA(n) + a ribonucleoside 5'-diphosphate. Involved in mRNA degradation. Catalyzes the phosphorolysis of single-stranded polyribonucleotides processively in the 3'- to 5'-direction. This is Polyribonucleotide nucleotidyltransferase from Bifidobacterium animalis subsp. lactis (strain AD011).